Reading from the N-terminus, the 214-residue chain is Guanylate kinase (214 aa).

One can recognise a Guanylate kinase-like domain in the interval 12–191 (GLMLVMSSPS…SIAAVQAILA (180 aa)). Residue 19–26 (SPSGAGKT) coordinates ATP.

It belongs to the guanylate kinase family.

It localises to the cytoplasm. It carries out the reaction GMP + ATP = GDP + ADP. Functionally, essential for recycling GMP and indirectly, cGMP. The polypeptide is Guanylate kinase (Paramagnetospirillum magneticum (strain ATCC 700264 / AMB-1) (Magnetospirillum magneticum)).